Reading from the N-terminus, the 289-residue chain is Acetylglutamate kinase (289 aa).

Residues 60–61, R82, and N186 each bind substrate; that span reads GG.

The protein belongs to the acetylglutamate kinase family. ArgB subfamily.

The protein resides in the cytoplasm. The catalysed reaction is N-acetyl-L-glutamate + ATP = N-acetyl-L-glutamyl 5-phosphate + ADP. Its pathway is amino-acid biosynthesis; L-arginine biosynthesis; N(2)-acetyl-L-ornithine from L-glutamate: step 2/4. In terms of biological role, catalyzes the ATP-dependent phosphorylation of N-acetyl-L-glutamate. The sequence is that of Acetylglutamate kinase from Methanoculleus marisnigri (strain ATCC 35101 / DSM 1498 / JR1).